A 301-amino-acid chain; its full sequence is Ribonuclease HIII (301 aa).

The region spanning 88–301 (RPRIGVDESG…TFYEVLGSTS (214 aa)) is the RNase H type-2 domain. Residues D94, E95, and D198 each coordinate a divalent metal cation.

Belongs to the RNase HII family. RnhC subfamily. The cofactor is Mn(2+). Requires Mg(2+) as cofactor.

Its subcellular location is the cytoplasm. It catalyses the reaction Endonucleolytic cleavage to 5'-phosphomonoester.. Endonuclease that specifically degrades the RNA of RNA-DNA hybrids. In Chlamydia muridarum (strain MoPn / Nigg), this protein is Ribonuclease HIII (rnhC).